The sequence spans 151 residues: U1 small nuclear ribonucleoprotein C (151 aa).

The segment at 4-36 adopts a Matrin-type zinc-finger fold; the sequence is YYCDYCDTYLTHDSPSVRKTHCTGRKHKDNVKF.

This sequence belongs to the U1 small nuclear ribonucleoprotein C family. U1 snRNP is composed of the 7 core Sm proteins B/B', D1, D2, D3, E, F and G that assemble in a heptameric protein ring on the Sm site of the small nuclear RNA to form the core snRNP, and at least 3 U1 snRNP-specific proteins U1-70K, U1-A and U1-C. U1-C interacts with U1 snRNA and the 5' splice-site region of the pre-mRNA.

The protein localises to the nucleus. Its function is as follows. Component of the spliceosomal U1 snRNP, which is essential for recognition of the pre-mRNA 5' splice-site and the subsequent assembly of the spliceosome. U1-C is directly involved in initial 5' splice-site recognition for both constitutive and regulated alternative splicing. The interaction with the 5' splice-site seems to precede base-pairing between the pre-mRNA and the U1 snRNA. Stimulates commitment or early (E) complex formation by stabilizing the base pairing of the 5' end of the U1 snRNA and the 5' splice-site region. In Anopheles darlingi (Mosquito), this protein is U1 small nuclear ribonucleoprotein C.